The sequence spans 1352 residues: Astrotactin-2 (1352 aa).

The segment at 1 to 31 (MAAAGARRSPGRGLGLRGRPRLGFHPGPPPP) is disordered. The N-terminal stretch at 1-51 (MAAAGARRSPGRGLGLRGRPRLGFHPGPPPPPPPPLLLLFLLLLPPPPLLA) is a signal peptide. Residues 52 to 218 (GATAAAASRE…IVEEQMHILH (167 aa)) are Lumenal-facing. N-linked (GlcNAc...) asparagine glycosylation occurs at asparagine 180. The chain crosses the membrane as a helical span at residues 219–239 (ISVMGGLIALLLLLLVFTVAL). Topologically, residues 240–447 (YAQRRWQKRR…KGLLKSPVNK (208 aa)) are cytoplasmic. Disordered stretches follow at residues 308-327 (EEEE…DEFG) and 375-421 (TPVE…ADDE). A compositionally biased stretch (polar residues) spans 383–392 (QPASRSSTSA). The helical transmembrane segment at 448 to 468 (TALTLIAVSSCILAMVCGNQM) threads the bilayer. At 469–1352 (SCPLTVKVTL…RNTYGETKGR (884 aa)) the chain is on the lumenal side. 3 EGF-like domains span residues 523-563 (VRDL…HLCV), 664-708 (PVRD…SGCY), and 712-764 (KGID…KSCL). Disulfide bonds link cysteine 527-cysteine 539, cysteine 535-cysteine 546, cysteine 548-cysteine 562, cysteine 668-cysteine 681, cysteine 675-cysteine 692, cysteine 694-cysteine 707, cysteine 716-cysteine 728, cysteine 724-cysteine 748, and cysteine 750-cysteine 763. Asparagine 796 is a glycosylation site (N-linked (GlcNAc...) asparagine). Disulfide bonds link cysteine 838/cysteine 1000, cysteine 929/cysteine 990, and cysteine 996/cysteine 1003. Residue asparagine 1033 is glycosylated (N-linked (GlcNAc...) asparagine). Disulfide bonds link cysteine 1049–cysteine 1060, cysteine 1062–cysteine 1075, cysteine 1149–cysteine 1171, cysteine 1203–cysteine 1290, and cysteine 1311–cysteine 1334. Residues 1079 to 1201 (PQPVLRLSPT…SELSTVTLRT (123 aa)) enclose the Fibronectin type-III domain.

It belongs to the astrotactin family. As to quaternary structure, interacts with ASTN1; the interaction is not calcium-dependent. As to expression, detected in cerebellum granule neurons; not detected in astroglia (at protein level). Detected primarily in cerebellum, and at lower levels in brain cortex, olfactory bulb, hindbrain and hippocampus dentate gyrus. Between 6 and 10 days after birth, when granule cell migration occurs in the cerebellum, detected in granule cell precursors in the external germinal layer, the molecular layer, the internal granule layer and in Purkinje neurons. Detected in postmitotic neurons in adult cerebellum.

It localises to the membrane. The protein localises to the perikaryon. Its subcellular location is the cytoplasm. It is found in the cell cortex. The protein resides in the early endosome. It localises to the late endosome. The protein localises to the cytoplasmic vesicle. Its subcellular location is the clathrin-coated vesicle. Functionally, mediates recycling of the neuronal cell adhesion molecule ASTN1 to the anterior pole of the cell membrane in migrating neurons. Promotes ASTN1 internalization and intracellular transport of endocytosed ASTN1. Selectively binds inositol-4,5-bisphosphate, inositol-3,4,5-trisphosphate and inositol-1,3,4,5-tetrakisphosphate, suggesting it is recruited to membranes that contain lipids with a phosphoinositide headgroup. This is Astrotactin-2 (Astn2) from Mus musculus (Mouse).